We begin with the raw amino-acid sequence, 201 residues long: Small ribosomal subunit protein uS4 (201 aa).

The 61-residue stretch at 91 to 151 (SRLDNVVYRA…EKSQKMNWFE (61 aa)) folds into the S4 RNA-binding domain.

This sequence belongs to the universal ribosomal protein uS4 family. In terms of assembly, part of the 30S ribosomal subunit. Contacts protein S5. The interaction surface between S4 and S5 is involved in control of translational fidelity.

In terms of biological role, one of the primary rRNA binding proteins, it binds directly to 16S rRNA where it nucleates assembly of the body of the 30S subunit. Functionally, with S5 and S12 plays an important role in translational accuracy. The polypeptide is Small ribosomal subunit protein uS4 (Corynebacterium glutamicum (strain ATCC 13032 / DSM 20300 / JCM 1318 / BCRC 11384 / CCUG 27702 / LMG 3730 / NBRC 12168 / NCIMB 10025 / NRRL B-2784 / 534)).